A 468-amino-acid chain; its full sequence is ATP synthase subunit beta (468 aa).

An ATP-binding site is contributed by G148 to T155.

It belongs to the ATPase alpha/beta chains family. In terms of assembly, F-type ATPases have 2 components, CF(1) - the catalytic core - and CF(0) - the membrane proton channel. CF(1) has five subunits: alpha(3), beta(3), gamma(1), delta(1), epsilon(1). CF(0) has three main subunits: a(1), b(2) and c(9-12). The alpha and beta chains form an alternating ring which encloses part of the gamma chain. CF(1) is attached to CF(0) by a central stalk formed by the gamma and epsilon chains, while a peripheral stalk is formed by the delta and b chains.

It is found in the cell inner membrane. It catalyses the reaction ATP + H2O + 4 H(+)(in) = ADP + phosphate + 5 H(+)(out). Functionally, produces ATP from ADP in the presence of a proton gradient across the membrane. The catalytic sites are hosted primarily by the beta subunits. The chain is ATP synthase subunit beta from Xanthomonas oryzae pv. oryzae (strain KACC10331 / KXO85).